The primary structure comprises 338 residues: tRNA N6-adenosine threonylcarbamoyltransferase (338 aa).

His-111 and His-115 together coordinate Fe cation. Residues Leu-134–Gly-138, Asp-167, Gly-180, and Asn-272 each bind substrate. Asp-300 is a binding site for Fe cation.

It belongs to the KAE1 / TsaD family. Requires Fe(2+) as cofactor.

The protein resides in the cytoplasm. The enzyme catalyses L-threonylcarbamoyladenylate + adenosine(37) in tRNA = N(6)-L-threonylcarbamoyladenosine(37) in tRNA + AMP + H(+). Functionally, required for the formation of a threonylcarbamoyl group on adenosine at position 37 (t(6)A37) in tRNAs that read codons beginning with adenine. Is involved in the transfer of the threonylcarbamoyl moiety of threonylcarbamoyl-AMP (TC-AMP) to the N6 group of A37, together with TsaE and TsaB. TsaD likely plays a direct catalytic role in this reaction. This is tRNA N6-adenosine threonylcarbamoyltransferase from Shewanella halifaxensis (strain HAW-EB4).